Consider the following 328-residue polypeptide: Global transcription regulator sge1 (328 aa).

2 disordered regions span residues 94–120 (PGEK…PRQR) and 251–293 (QMHQ…QYVH). 3 stretches are compositionally biased toward low complexity: residues 106–116 (KSTTQSGGISK), 251–261 (QMHQPQVHQPL), and 282–293 (AHQPQVHQQYVH).

This sequence belongs to the MIT1/WOR1 family.

It localises to the nucleus. Its function is as follows. Global transcriptional regulator of transcription that impacts, but is not absolutely required for secondary metabolism and pathogenicity on maize. Regulates synthesis of multiple secondary metabolites, including fumonisins and fusarins. The polypeptide is Global transcription regulator sge1 (Gibberella moniliformis (strain M3125 / FGSC 7600) (Maize ear and stalk rot fungus)).